We begin with the raw amino-acid sequence, 250 residues long: Prophage antitermination protein Q homolog QuuQ (250 aa).

Belongs to the phage antitermination Q type 2 family.

Functionally, positively regulate expression of some phage genes. Bacterial host RNA polymerase modified by antitermination proteins transcribes through termination sites that otherwise prevent expression of the regulated genes. In Escherichia coli (strain K12), this protein is Prophage antitermination protein Q homolog QuuQ (quuQ).